A 166-amino-acid chain; its full sequence is Large ribosomal subunit protein uL10 (166 aa).

It belongs to the universal ribosomal protein uL10 family. Part of the ribosomal stalk of the 50S ribosomal subunit. The N-terminus interacts with L11 and the large rRNA to form the base of the stalk. The C-terminus forms an elongated spine to which L12 dimers bind in a sequential fashion forming a multimeric L10(L12)X complex.

Its function is as follows. Forms part of the ribosomal stalk, playing a central role in the interaction of the ribosome with GTP-bound translation factors. In Streptococcus gordonii (strain Challis / ATCC 35105 / BCRC 15272 / CH1 / DL1 / V288), this protein is Large ribosomal subunit protein uL10.